The following is a 154-amino-acid chain: MRDLTTAMSDLPRDLEEEVLSRVQLASLRAVRTTCKKWNRRLSKYRFTKKYIRKSRSATADKEFLAIMMLDSSLYLMNVVIDKIDNENNVESSIERKGKLISVNDADGVDIISVVHYNALLLCLTKEKTPKACGLEPLSWAIKVDRNCLSLRFI.

The F-box domain maps to 5–51 (TTAMSDLPRDLEEEVLSRVQLASLRAVRTTCKKWNRRLSKYRFTKKY).

The chain is Putative F-box protein At2g11200 from Arabidopsis thaliana (Mouse-ear cress).